A 292-amino-acid chain; its full sequence is MLFLGSHVAMKKPHNFQGSIQTAISYGANALMVYSGAPQNTIRSKTEELKIKEALKIAQNNNLSLNNLVGHAPYIINLANPDKTKRAFAIDFLSQELERFAAMKINKMVLHPGNYLKTNPQEGISLIAQSLDLIFAKTKHLKTQISLETMAGKGTEIGKRLEELQQIRTLVKNKTRVSFCLDTCHLFDAGYDLKENLEEIIQKIDSILGFQNVSVIHINDSKNECNSHKDRHENIGFGKIGFETLLKIIYHRAFVCIPKILETPYINEKEPYKHEIEMIKTKNFNPELKNLF.

Residues H71, H111, E148, D182, H185, H217, D230, H232, and E262 each contribute to the Zn(2+) site.

Belongs to the AP endonuclease 2 family. Requires Zn(2+) as cofactor.

It catalyses the reaction Endonucleolytic cleavage to 5'-phosphooligonucleotide end-products.. Its function is as follows. Endonuclease IV plays a role in DNA repair. It cleaves phosphodiester bonds at apurinic or apyrimidinic (AP) sites, generating a 3'-hydroxyl group and a 5'-terminal sugar phosphate. In Aster yellows witches'-broom phytoplasma (strain AYWB), this protein is Probable endonuclease 4.